The following is a 101-amino-acid chain: Small ribosomal subunit protein uS10 (101 aa).

It belongs to the universal ribosomal protein uS10 family. As to quaternary structure, part of the 30S ribosomal subunit.

Involved in the binding of tRNA to the ribosomes. The sequence is that of Small ribosomal subunit protein uS10 from Brachyspira pilosicoli (Serpulina pilosicoli).